Here is a 456-residue protein sequence, read N- to C-terminus: Bifunctional protein GlmU (456 aa).

The pyrophosphorylase stretch occupies residues 1 to 229 (MLNSAMSVVI…ISETDGVNNR (229 aa)). Residues 11–14 (LAAG), K25, Q76, 81–82 (GT), 103–105 (YGD), G140, E154, N169, and N227 each bind UDP-N-acetyl-alpha-D-glucosamine. D105 contacts Mg(2+). N227 contributes to the Mg(2+) binding site. The tract at residues 230 to 250 (LQLSRLERIYQAEQAEKLLLS) is linker. The interval 251–456 (GVMLRDPARF…QGWQRPVKKK (206 aa)) is N-acetyltransferase. UDP-N-acetyl-alpha-D-glucosamine is bound by residues R333 and K351. The Proton acceptor role is filled by H363. The UDP-N-acetyl-alpha-D-glucosamine site is built by Y366 and N377. Acetyl-CoA contacts are provided by residues A380, 386 to 387 (NY), S405, A423, and R440.

It in the N-terminal section; belongs to the N-acetylglucosamine-1-phosphate uridyltransferase family. This sequence in the C-terminal section; belongs to the transferase hexapeptide repeat family. In terms of assembly, homotrimer. It depends on Mg(2+) as a cofactor.

Its subcellular location is the cytoplasm. The catalysed reaction is alpha-D-glucosamine 1-phosphate + acetyl-CoA = N-acetyl-alpha-D-glucosamine 1-phosphate + CoA + H(+). The enzyme catalyses N-acetyl-alpha-D-glucosamine 1-phosphate + UTP + H(+) = UDP-N-acetyl-alpha-D-glucosamine + diphosphate. Its pathway is nucleotide-sugar biosynthesis; UDP-N-acetyl-alpha-D-glucosamine biosynthesis; N-acetyl-alpha-D-glucosamine 1-phosphate from alpha-D-glucosamine 6-phosphate (route II): step 2/2. The protein operates within nucleotide-sugar biosynthesis; UDP-N-acetyl-alpha-D-glucosamine biosynthesis; UDP-N-acetyl-alpha-D-glucosamine from N-acetyl-alpha-D-glucosamine 1-phosphate: step 1/1. It functions in the pathway bacterial outer membrane biogenesis; LPS lipid A biosynthesis. Its function is as follows. Catalyzes the last two sequential reactions in the de novo biosynthetic pathway for UDP-N-acetylglucosamine (UDP-GlcNAc). The C-terminal domain catalyzes the transfer of acetyl group from acetyl coenzyme A to glucosamine-1-phosphate (GlcN-1-P) to produce N-acetylglucosamine-1-phosphate (GlcNAc-1-P), which is converted into UDP-GlcNAc by the transfer of uridine 5-monophosphate (from uridine 5-triphosphate), a reaction catalyzed by the N-terminal domain. The polypeptide is Bifunctional protein GlmU (Salmonella schwarzengrund (strain CVM19633)).